An 86-amino-acid polypeptide reads, in one-letter code: Large ribosomal subunit protein bL27 (86 aa).

The span at 1-10 (MAQKKGGGST) shows a compositional bias: gly residues. Positions 1-20 (MAQKKGGGSTRNGRDSESKR) are disordered.

It belongs to the bacterial ribosomal protein bL27 family.

In Polynucleobacter necessarius subsp. necessarius (strain STIR1), this protein is Large ribosomal subunit protein bL27.